A 275-amino-acid polypeptide reads, in one-letter code: Elongation factor Ts (275 aa).

The segment at 76–79 (TDFV) is involved in Mg(2+) ion dislocation from EF-Tu.

It belongs to the EF-Ts family.

It localises to the cytoplasm. Functionally, associates with the EF-Tu.GDP complex and induces the exchange of GDP to GTP. It remains bound to the aminoacyl-tRNA.EF-Tu.GTP complex up to the GTP hydrolysis stage on the ribosome. The polypeptide is Elongation factor Ts (Nocardia farcinica (strain IFM 10152)).